The following is a 470-amino-acid chain: Dendritic cell-specific transmembrane protein (470 aa).

At 1-34 (MGIWTSGTDIFLSLWEIYVSPRSPGWMDFIQHLG) the chain is on the cytoplasmic side. Residues 35-55 (VCCLVALISVGLLSVAACWFL) form a helical membrane-spanning segment. The Extracellular segment spans residues 56–57 (PS). The helical transmembrane segment at 58–78 (IIAAAASWIITCVLLCCSKHA) threads the bilayer. At 79–97 (RCFILLVFLSCGLREGRNA) the chain is on the cytoplasmic side. A helical transmembrane segment spans residues 98 to 118 (LIAAGTGIVILGHVENIFHNF). Over 119-209 (KGLLDGMTCN…MATTTEVLSS (91 aa)) the chain is Extracellular. A helical membrane pass occupies residues 210-230 (LGQKLLAFAGLSLVLLGTGLF). Topologically, residues 231–292 (MKRFLGPCGW…FWPTPKERKN (62 aa)) are cytoplasmic. A helical transmembrane segment spans residues 293–313 (LGLFFLPILIHLCIWVLFAAV). Residues 314 to 376 (DYLLYRLIFS…PKPKFLLSET (63 aa)) lie on the Extracellular side of the membrane. A helical membrane pass occupies residues 377–397 (WVPLSVILLILVMLGLLSSIL). Residues 398 to 470 (MQLKILVSAS…QMDMASADKS (73 aa)) are Cytoplasmic-facing.

Monomer. Homodimer. Isoform 1 interacts (via the C-terminus cytoplasmic tail) with OS9 isoform 1 (via the C-terminus tail); the interaction induces DCSTAMP redistribution to the endoplasmic reticulum-Golgi intermediate compartment. Isoform 1 interacts (via the C-terminus cytoplasmic tail) with OS9 isoform 2 (via the C-terminus tail). Interacts with CREB3. Post-translationally, glycosylated. Preferentially expressed by dendritic cells (DCs). Detected in both immature and mature DCs. Highly expressed in lymph nodes, lung, kidney and liver. Expressed at lower levels in pancreas, bone marrow, spleen, leukocytes, in freshly isolated peripheral blood mononuclear cells (PBMC) and B-cells. Not expressed in freshly isolated monocytes.

It localises to the cell membrane. The protein localises to the endoplasmic reticulum membrane. Its subcellular location is the endoplasmic reticulum-Golgi intermediate compartment membrane. It is found in the endosome. Functionally, probable cell surface receptor that plays several roles in cellular fusion, cell differentiation, bone and immune homeostasis. Plays a role in TNFSF11-mediated osteoclastogenesis. Cooperates with OCSTAMP in modulating cell-cell fusion in both osteoclasts and foreign body giant cells (FBGCs). Participates in osteoclast bone resorption. Involved in inducing the expression of tartrate-resistant acid phosphatase in osteoclast precursors. Plays a role in haematopoietic stem cell differentiation of bone marrow cells toward the myeloid lineage. Inhibits the development of neutrophilic granulocytes. Plays also a role in the regulation of dendritic cell (DC) antigen presentation activity by controlling phagocytic activity. Involved in the maintenance of immune self-tolerance and avoidance of autoimmune reactions. The polypeptide is Dendritic cell-specific transmembrane protein (DCSTAMP) (Homo sapiens (Human)).